A 324-amino-acid chain; its full sequence is Carbonic anhydrase 15 (324 aa).

The signal sequence occupies residues 1–18 (MWALDFLLSFLLIQLAAQ). In terms of domain architecture, Alpha-carbonic anhydrase spans 23–293 (GTWCYDSQDP…LGGRRISASP (271 aa)). H90 (proton acceptor) is an active-site residue. Zn(2+) contacts are provided by H122, H124, and H147. Residue Y155 is part of the active site. N184, N194, and N203 each carry an N-linked (GlcNAc...) asparagine glycan. A substrate-binding site is contributed by 231 to 232 (TT). The interval 269-290 (LHPRPLTSNFRPQQPLGGRRIS) is disordered.

This sequence belongs to the alpha-carbonic anhydrase family. The cofactor is Zn(2+).

The protein localises to the secreted. The enzyme catalyses hydrogencarbonate + H(+) = CO2 + H2O. Its activity is regulated as follows. Repressed by coumarins. Its function is as follows. Reversible hydration of carbon dioxide. This chain is Carbonic anhydrase 15 (Ca15), found in Mus musculus (Mouse).